Consider the following 388-residue polypeptide: Galactokinase (388 aa).

33–36 (EHTD) serves as a coordination point for substrate. Residues Ser67 and 124–130 (GSGLSSS) contribute to the ATP site. 2 residues coordinate Mg(2+): Ser130 and Glu162. Asp174 serves as the catalytic Proton acceptor. A substrate-binding site is contributed by Tyr224.

Belongs to the GHMP kinase family. GalK subfamily.

Its subcellular location is the cytoplasm. The catalysed reaction is alpha-D-galactose + ATP = alpha-D-galactose 1-phosphate + ADP + H(+). It functions in the pathway carbohydrate metabolism; galactose metabolism. Catalyzes the transfer of the gamma-phosphate of ATP to D-galactose to form alpha-D-galactose-1-phosphate (Gal-1-P). The protein is Galactokinase of Streptococcus thermophilus (strain ATCC BAA-491 / LMD-9).